Consider the following 232-residue polypeptide: dTTP/UTP pyrophosphatase (232 aa).

Asp-103 (proton acceptor) is an active-site residue.

The protein belongs to the Maf family. YhdE subfamily. A divalent metal cation is required as a cofactor.

The protein localises to the cytoplasm. The enzyme catalyses dTTP + H2O = dTMP + diphosphate + H(+). The catalysed reaction is UTP + H2O = UMP + diphosphate + H(+). It carries out the reaction 5-methyl-UTP + H2O = 5-methyl-UMP + diphosphate + H(+). It catalyses the reaction psi-UTP + H2O = psi-UMP + diphosphate + H(+). Functionally, nucleoside triphosphate pyrophosphatase that hydrolyzes dTTP and UTP. Can also hydrolyze the modified nucleotides 5-methyl-UTP (m(5)UTP) and pseudo-UTP. Has weak activity with CTP. May have a dual role in cell division arrest and in preventing the incorporation of modified nucleotides into cellular nucleic acids. The polypeptide is dTTP/UTP pyrophosphatase (Saccharomyces cerevisiae (strain ATCC 204508 / S288c) (Baker's yeast)).